The chain runs to 452 residues: Protein henna (452 aa).

The region spanning 36 to 107 (FSPKDSSLSS…EQCSYFNIIS (72 aa)) is the ACT domain. S272 is subject to Phosphoserine; by CaMK2. Residues H284, H289, and E329 each contribute to the Fe cation site.

It belongs to the biopterin-dependent aromatic amino acid hydroxylase family. Requires Fe(2+) as cofactor. As to expression, phenylalanine hydrolase activity is found in yolk granules of embryos, and female abdomen and fat body tissues. Tryptophan hydroxylase is expressed in serotonergic neurons. Both enzymes are present in cuticular tissues.

It carries out the reaction (6R)-L-erythro-5,6,7,8-tetrahydrobiopterin + L-phenylalanine + O2 = (4aS,6R)-4a-hydroxy-L-erythro-5,6,7,8-tetrahydrobiopterin + L-tyrosine. The enzyme catalyses (6R)-L-erythro-5,6,7,8-tetrahydrobiopterin + L-tryptophan + O2 = 5-hydroxy-L-tryptophan + (4aS,6R)-4a-hydroxy-L-erythro-5,6,7,8-tetrahydrobiopterin. It participates in amino-acid degradation; L-phenylalanine degradation; acetoacetate and fumarate from L-phenylalanine: step 1/6. With respect to regulation, N-terminal region of PAH is thought to contain allosteric binding sites for phenylalanine and to constitute an 'inhibitory' domain that regulates the activity of a catalytic domain in the C-terminal portion of the molecule. This is Protein henna (Hn) from Drosophila melanogaster (Fruit fly).